A 433-amino-acid chain; its full sequence is Phosphoribosylamine--glycine ligase (433 aa).

The 207-residue stretch at 111–317 folds into the ATP-grasp domain; that stretch reads EFMARNNIKG…FVDICEAIVD (207 aa). 138–194 provides a ligand contact to ATP; the sequence is EDNPDVVVKPAGLTGGKGVKVMGEHMHTLEEAREYVKSVLEHDRVVIEERLKGEEVT. The Mg(2+) site is built by Gln275, Glu287, and Asn289. Mn(2+) is bound by residues Gln275, Glu287, and Asn289.

The protein belongs to the GARS family. Mg(2+) serves as cofactor. Requires Mn(2+) as cofactor.

It catalyses the reaction 5-phospho-beta-D-ribosylamine + glycine + ATP = N(1)-(5-phospho-beta-D-ribosyl)glycinamide + ADP + phosphate + H(+). Its pathway is purine metabolism; IMP biosynthesis via de novo pathway; N(1)-(5-phospho-D-ribosyl)glycinamide from 5-phospho-alpha-D-ribose 1-diphosphate: step 2/2. The polypeptide is Phosphoribosylamine--glycine ligase (Methanocella arvoryzae (strain DSM 22066 / NBRC 105507 / MRE50)).